The sequence spans 877 residues: ABC transporter A family member 1 (877 aa).

7 helical membrane-spanning segments follow: residues 46 to 66, 268 to 288, 324 to 344, 347 to 367, 379 to 399, 420 to 440, and 479 to 499; these read YFST…LFLI, VWGG…LLYK, ILIS…FFLG, FFVL…VAFF, IGIG…FSGM, IILF…IGNV, and LLAL…IIPG. Residues 552–788 form the ABC transporter domain; it reads LIICGLSKSY…YGEGYSVNIV (237 aa). 591–598 lines the ATP pocket; that stretch reads GSNGCGKS.

This sequence belongs to the ABC transporter superfamily. ABCA family.

The protein localises to the membrane. This Dictyostelium discoideum (Social amoeba) protein is ABC transporter A family member 1 (abcA1).